The following is a 266-amino-acid chain: Indole-3-glycerol phosphate synthase (266 aa).

The protein belongs to the TrpC family.

It carries out the reaction 1-(2-carboxyphenylamino)-1-deoxy-D-ribulose 5-phosphate + H(+) = (1S,2R)-1-C-(indol-3-yl)glycerol 3-phosphate + CO2 + H2O. It functions in the pathway amino-acid biosynthesis; L-tryptophan biosynthesis; L-tryptophan from chorismate: step 4/5. The sequence is that of Indole-3-glycerol phosphate synthase from Variovorax paradoxus (strain S110).